Consider the following 22-residue polypeptide: thr operon leader peptide (22 aa).

Belongs to the thr operon leader peptide family.

Its function is as follows. This protein is involved in control of the biosynthesis of threonine. In Yersinia pestis bv. Antiqua (strain Antiqua), this protein is thr operon leader peptide.